Here is a 435-residue protein sequence, read N- to C-terminus: MIDRYLTPEMKVLWSEANKYRAWLKVELSALQAQARHGEVPAEAHAALVQKSEADPLDDAFAQQVAEIEAVTRHDIVAFTRALTERYGEEARFIHHGLTSTDVVDTAQNLLLDEAMGLIITDVQTLREVCRMQAAAHKHTPVVGRTHGIHAEPMTFGLKFLNWMATLDRDLERLQAARGRVQVVMLSGSVGTYAHVSPKIEEEVAESWGWHAAPVTNQTLARDRHAEVLAALAILGTTLEKIAVEIRHLQRSEVREAMEPFGKGQTGSSSMPHKKNPILTENVTGFARLLRGFLATGLENVALWHERDISHSSAERVILPDATASASYATRRLTGVLRDLVVFPERMLKNLDDLGGLVFSQRVLHALIDDKGMMREAAYGIVQRNALKSWETGEGLRDLLKADPENPLSDAELDAAFDLQWYLRHVDDIYARFGM.

N(6)-(1,2-dicarboxyethyl)-AMP-binding positions include 4–5 (RY), 73–75 (RHD), and 99–100 (TS). Catalysis depends on histidine 147, which acts as the Proton donor/acceptor. Glutamine 218 serves as a coordination point for N(6)-(1,2-dicarboxyethyl)-AMP. Residue serine 268 is the Proton donor/acceptor of the active site. N(6)-(1,2-dicarboxyethyl)-AMP-binding positions include serine 269, 274–276 (KKN), asparagine 282, and 313–317 (SAERV).

Belongs to the lyase 1 family. Adenylosuccinate lyase subfamily. As to quaternary structure, homotetramer. Residues from neighboring subunits contribute catalytic and substrate-binding residues to each active site.

It carries out the reaction N(6)-(1,2-dicarboxyethyl)-AMP = fumarate + AMP. It catalyses the reaction (2S)-2-[5-amino-1-(5-phospho-beta-D-ribosyl)imidazole-4-carboxamido]succinate = 5-amino-1-(5-phospho-beta-D-ribosyl)imidazole-4-carboxamide + fumarate. The protein operates within purine metabolism; AMP biosynthesis via de novo pathway; AMP from IMP: step 2/2. It functions in the pathway purine metabolism; IMP biosynthesis via de novo pathway; 5-amino-1-(5-phospho-D-ribosyl)imidazole-4-carboxamide from 5-amino-1-(5-phospho-D-ribosyl)imidazole-4-carboxylate: step 2/2. Functionally, catalyzes two reactions in de novo purine nucleotide biosynthesis. Catalyzes the breakdown of 5-aminoimidazole- (N-succinylocarboxamide) ribotide (SAICAR or 2-[5-amino-1-(5-phospho-beta-D-ribosyl)imidazole-4-carboxamido]succinate) to 5-aminoimidazole-4-carboxamide ribotide (AICAR or 5-amino-1-(5-phospho-beta-D-ribosyl)imidazole-4-carboxamide) and fumarate, and of adenylosuccinate (ADS or N(6)-(1,2-dicarboxyethyl)-AMP) to adenosine monophosphate (AMP) and fumarate. This Deinococcus radiodurans (strain ATCC 13939 / DSM 20539 / JCM 16871 / CCUG 27074 / LMG 4051 / NBRC 15346 / NCIMB 9279 / VKM B-1422 / R1) protein is Adenylosuccinate lyase (purB).